Consider the following 358-residue polypeptide: Probable isocitrate dehydrogenase [NAD] subunit alpha, mitochondrial (358 aa).

Arg-108, Arg-118, Arg-139, and Asp-226 together coordinate substrate. Residues Asp-226, Asp-250, and Asp-254 each contribute to the Mg(2+) site.

Belongs to the isocitrate and isopropylmalate dehydrogenases family. Heterooligomer of subunits alpha, beta, and gamma in the apparent ratio of 2:1:1. The cofactor is Mg(2+). Mn(2+) is required as a cofactor.

The protein resides in the mitochondrion. The catalysed reaction is D-threo-isocitrate + NAD(+) = 2-oxoglutarate + CO2 + NADH. The protein is Probable isocitrate dehydrogenase [NAD] subunit alpha, mitochondrial (idha-1) of Caenorhabditis elegans.